Reading from the N-terminus, the 291-residue chain is 4-diphosphocytidyl-2-C-methyl-D-erythritol kinase (291 aa).

Lysine 21 is a catalytic residue. 104–114 (PMGGGLGGGSS) contributes to the ATP binding site. Residue aspartate 146 is part of the active site.

Belongs to the GHMP kinase family. IspE subfamily.

It carries out the reaction 4-CDP-2-C-methyl-D-erythritol + ATP = 4-CDP-2-C-methyl-D-erythritol 2-phosphate + ADP + H(+). It functions in the pathway isoprenoid biosynthesis; isopentenyl diphosphate biosynthesis via DXP pathway; isopentenyl diphosphate from 1-deoxy-D-xylulose 5-phosphate: step 3/6. In terms of biological role, catalyzes the phosphorylation of the position 2 hydroxy group of 4-diphosphocytidyl-2C-methyl-D-erythritol. The polypeptide is 4-diphosphocytidyl-2-C-methyl-D-erythritol kinase (Methylococcus capsulatus (strain ATCC 33009 / NCIMB 11132 / Bath)).